The primary structure comprises 323 residues: Elongation factor P--(R)-beta-lysine ligase (323 aa).

Position 76-78 (Ser76–Glu78) interacts with substrate. ATP contacts are provided by residues Arg100 to Glu102 and Asn109. Tyr118 contributes to the substrate binding site. Glu242–Leu243 contributes to the ATP binding site. Glu249 lines the substrate pocket. Residue Gly298 coordinates ATP.

Belongs to the class-II aminoacyl-tRNA synthetase family. EpmA subfamily. In terms of assembly, homodimer.

It carries out the reaction D-beta-lysine + L-lysyl-[protein] + ATP = N(6)-((3R)-3,6-diaminohexanoyl)-L-lysyl-[protein] + AMP + diphosphate + H(+). Its function is as follows. With EpmB is involved in the beta-lysylation step of the post-translational modification of translation elongation factor P (EF-P). Catalyzes the ATP-dependent activation of (R)-beta-lysine produced by EpmB, forming a lysyl-adenylate, from which the beta-lysyl moiety is then transferred to the epsilon-amino group of a conserved specific lysine residue in EF-P. In Mannheimia succiniciproducens (strain KCTC 0769BP / MBEL55E), this protein is Elongation factor P--(R)-beta-lysine ligase.